A 569-amino-acid chain; its full sequence is Aspartic proteinase 3 (569 aa).

The N-terminal stretch at 1 to 21 (MKLKTVRSAVLSSLFASQVLG) is a signal peptide. The propeptide occupies 22–67 (KIIPAANKRDDDSNSKFVKLPFHKLYGDSLENVGSDKKPEVRLLKR). The region spanning 83-475 (YSVDLEVGTP…DLENLEISMA (393 aa)) is the Peptidase A1 domain. Asn-95 carries an N-linked (GlcNAc...) asparagine glycan. Asp-101 is an active-site residue. Residues Asn-203, Asn-232, Asn-242, Asn-245, Asn-299, and Asn-358 are each glycosylated (N-linked (GlcNAc...) asparagine). Residue Asp-371 is part of the active site. N-linked (GlcNAc...) asparagine glycans are attached at residues Asn-480, Asn-522, and Asn-532. The GPI-anchor amidated asparagine moiety is linked to residue Asn-548. The propeptide at 549 to 569 (VGDHIVPSLPLTLISLLFAFI) is removed in mature form.

The protein belongs to the peptidase A1 family. In terms of assembly, consists of an alpha and a beta subunit, which are maintained together by a disulfide bond. Post-translationally, the zymogen is transported to the periplasm, where the propeptide is removed and the enzyme is further subjected to an internal, autocatalytic cleavage to generate an alpha/beta two-subunit endopeptidase. The proteolytic processing at the cell surface is regulated by the environmental pH. Extensively N-glycosylated.

It is found in the cell membrane. The enzyme catalyses Hydrolyzes various precursor proteins with Arg or Lys in P1, and commonly Arg or Lys also in P2. The P3 amino acid is usually non-polar, but otherwise additional basic amino acids are favorable in both non-prime and prime positions.. Functionally, cleaves proteins C-terminally to mono- and paired-basic residues. Involved in the shedding of a subset of GPI-anchored plasma membrane proteins from the cell surface, including itself, GAS1 and MSB2. May also play a role in the maturation of GPI-mannoproteins associated with the cell wall. Can process the alpha-mating factor precursor. Required for cell wall integrity. This Saccharomyces cerevisiae (strain ATCC 204508 / S288c) (Baker's yeast) protein is Aspartic proteinase 3 (YPS1).